The following is a 1483-amino-acid chain: Ubiquitin fusion degradation protein 4 (1483 aa).

A disordered region spans residues 1–117 (MSENNSHNLD…NNEFGSNPLH (117 aa)). A compositionally biased stretch (basic and acidic residues) spans 8-18 (NLDEHESHSEN). Residues 61–70 (EADDGEDDDN) show a composition bias toward acidic residues. Thr-87 is modified (phosphothreonine). Residue Lys-349 forms a Glycyl lysine isopeptide (Lys-Gly) (interchain with G-Cter in ubiquitin) linkage. The interval 1007-1081 (CGVKSDSFIN…LIQLWKNKSK (75 aa)) is K-box. Residues 1376–1483 (AEHGYTMDSS…EEGAGAFLLS (108 aa)) enclose the HECT domain. Cys-1450 (glycyl thioester intermediate) is an active-site residue.

It belongs to the UPL family. K-HECT subfamily.

It catalyses the reaction S-ubiquitinyl-[E2 ubiquitin-conjugating enzyme]-L-cysteine + [acceptor protein]-L-lysine = [E2 ubiquitin-conjugating enzyme]-L-cysteine + N(6)-ubiquitinyl-[acceptor protein]-L-lysine.. In terms of biological role, E3 ubiquitin-protein ligase which accepts ubiquitin from an E2 ubiquitin-conjugating enzyme in the form of a thioester and then directly transfers the ubiquitin to targeted substrates. In Saccharomyces cerevisiae (strain ATCC 204508 / S288c) (Baker's yeast), this protein is Ubiquitin fusion degradation protein 4 (UFD4).